A 794-amino-acid polypeptide reads, in one-letter code: DNA ligase (794 aa).

Residues 35-39 (DAEYD), 84-85 (SL), and Glu-126 each bind NAD(+). Catalysis depends on Lys-128, which acts as the N6-AMP-lysine intermediate. Positions 149, 186, 302, and 326 each coordinate NAD(+). Residues Cys-420, Cys-423, Cys-450, and Cys-456 each contribute to the Zn(2+) site. The BRCT domain maps to 711–794 (VEGLPLAGQT…KLLDEYGVAH (84 aa)).

The protein belongs to the NAD-dependent DNA ligase family. LigA subfamily. The cofactor is Mg(2+). Requires Mn(2+) as cofactor.

The catalysed reaction is NAD(+) + (deoxyribonucleotide)n-3'-hydroxyl + 5'-phospho-(deoxyribonucleotide)m = (deoxyribonucleotide)n+m + AMP + beta-nicotinamide D-nucleotide.. DNA ligase that catalyzes the formation of phosphodiester linkages between 5'-phosphoryl and 3'-hydroxyl groups in double-stranded DNA using NAD as a coenzyme and as the energy source for the reaction. It is essential for DNA replication and repair of damaged DNA. The protein is DNA ligase of Pseudomonas paraeruginosa (strain DSM 24068 / PA7) (Pseudomonas aeruginosa (strain PA7)).